The following is a 350-amino-acid chain: 3-isopropylmalate dehydrogenase (350 aa).

76-87 is a binding site for NAD(+); that stretch reads GPKWDNAPKRPE. The substrate site is built by R94, R104, R132, and D217. The Mg(2+) site is built by D217, D241, and D245. 275-287 provides a ligand contact to NAD(+); the sequence is GSAPDIANQNIAN.

Belongs to the isocitrate and isopropylmalate dehydrogenases family. LeuB type 1 subfamily. As to quaternary structure, homodimer. Mg(2+) is required as a cofactor. The cofactor is Mn(2+).

The protein localises to the cytoplasm. The enzyme catalyses (2R,3S)-3-isopropylmalate + NAD(+) = 4-methyl-2-oxopentanoate + CO2 + NADH. It participates in amino-acid biosynthesis; L-leucine biosynthesis; L-leucine from 3-methyl-2-oxobutanoate: step 3/4. Its function is as follows. Catalyzes the oxidation of 3-carboxy-2-hydroxy-4-methylpentanoate (3-isopropylmalate) to 3-carboxy-4-methyl-2-oxopentanoate. The product decarboxylates to 4-methyl-2 oxopentanoate. In Listeria monocytogenes serotype 4b (strain F2365), this protein is 3-isopropylmalate dehydrogenase.